The chain runs to 464 residues: Glutamate--tRNA ligase 2 (464 aa).

The 'HIGH' region signature appears at 11–21; sequence PSPTGFLHIGS. The short motif at 240–244 is the 'KMSKS' region element; that stretch reads KLSKR. Lys-243 lines the ATP pocket.

It belongs to the class-I aminoacyl-tRNA synthetase family. Glutamate--tRNA ligase type 1 subfamily. In terms of assembly, monomer.

It localises to the cytoplasm. It carries out the reaction tRNA(Glu) + L-glutamate + ATP = L-glutamyl-tRNA(Glu) + AMP + diphosphate. In terms of biological role, catalyzes the attachment of glutamate to tRNA(Glu) in a two-step reaction: glutamate is first activated by ATP to form Glu-AMP and then transferred to the acceptor end of tRNA(Glu). This is Glutamate--tRNA ligase 2 from Rickettsia bellii (strain OSU 85-389).